The following is a 156-amino-acid chain: Snaclec subunit B (156 aa).

Residues 1–23 form the signal peptide; sequence MGRSIFVNLGLLVVAFSLRGSEA. Cystine bridges form between Cys25/Cys36, Cys53/Cys144, and Cys119/Cys136. In terms of domain architecture, C-type lectin spans 32 to 145; the sequence is YDKYCYKVFD…CKSTLPFTCK (114 aa).

This sequence belongs to the snaclec family. As to quaternary structure, heterodimer of subunits A and B; disulfide-linked. As to expression, expressed by the venom gland.

Its subcellular location is the secreted. In terms of biological role, interferes with one step of hemostasis (modulation of platelet aggregation, or coagulation cascade, for example). The protein is Snaclec subunit B of Philodryas olfersii (Green snake).